The sequence spans 235 residues: Auracyanin-B (235 aa).

Residues Met-1 to Ser-21 show a composition bias toward low complexity. Disordered stretches follow at residues Met-1 to Ser-27 and Ala-64 to Asn-107. A signal peptide spans Met-1 to Ala-56. Residues Thr-57–Pro-80 constitute a propeptide that is removed on maturation. The span at Thr-69 to Ala-86 shows a compositional bias: pro residues. Residues Gln-87–Pro-100 are compositionally biased toward low complexity. In terms of domain architecture, Plastocyanin-like spans Ala-111 to Pro-235. Residues His-152, Cys-217, His-222, and Met-227 each coordinate Cu cation.

It belongs to the multicopper oxidase family. The cofactor is Cu cation. Post-translationally, glycosylated.

The protein resides in the cell membrane. In terms of biological role, probably a soluble electron acceptor for the integral membrane protein electron transfer alternative complex III (ACIII). This Chloroflexus aurantiacus (strain ATCC 29366 / DSM 635 / J-10-fl) protein is Auracyanin-B.